The sequence spans 365 residues: Phosphoserine aminotransferase (365 aa).

Arg40 contacts L-glutamate. Pyridoxal 5'-phosphate-binding positions include 74–75 (AS), Phe99, Thr155, Asp177, and Gln200. Position 201 is an N6-(pyridoxal phosphate)lysine (Lys201). Residue 241–242 (NT) participates in pyridoxal 5'-phosphate binding.

It belongs to the class-V pyridoxal-phosphate-dependent aminotransferase family. SerC subfamily. Homodimer. Pyridoxal 5'-phosphate serves as cofactor.

Its subcellular location is the cytoplasm. The catalysed reaction is O-phospho-L-serine + 2-oxoglutarate = 3-phosphooxypyruvate + L-glutamate. It catalyses the reaction 4-(phosphooxy)-L-threonine + 2-oxoglutarate = (R)-3-hydroxy-2-oxo-4-phosphooxybutanoate + L-glutamate. It participates in amino-acid biosynthesis; L-serine biosynthesis; L-serine from 3-phospho-D-glycerate: step 2/3. In terms of biological role, catalyzes the reversible conversion of 3-phosphohydroxypyruvate to phosphoserine and of 3-hydroxy-2-oxo-4-phosphonooxybutanoate to phosphohydroxythreonine. This is Phosphoserine aminotransferase from Lactococcus lactis subsp. cremoris (strain SK11).